The following is a 438-amino-acid chain: MAASATTMLLKYPTTVCGIPNSSANNSTDPSNNIVQIPQTTTTNSPLLKFRTPNKPVNAVAAPAFPSVTTTTTTTPSSIQSLVKDFDPLVPAEDALTPPSSWYTEPAFYAHELDRIFYKGWQVAGYSDQVKEANQYFTGTLGNVEYLVCRDGEGKVHAFHNVCTHRASILACGSGKKSCFVCPYHGWVYGMNGSLTKASKATPEQSLNPDELGLVPLKVAVWGPFILISLDRSSREVGDVGSEWLGSCAEDVKAHAFDPNLQFINRSEFPIESNWKIFSDNYLDSSYHVPYAHKYYATELDFDTYQTDMVGNVTIQRVAGTSNNGFNRLGTQAFYAFAYPNFAVERYGPWMTTMHIVPLGPRKCKLVVDYYIEKSKLDDKDYIEKGIAINDNVQKEDVVLCESVQKGLETPAYRSGRYVMPIEKGIHHFHCWLHQVLK.

Residues 1–58 (MAASATTMLLKYPTTVCGIPNSSANNSTDPSNNIVQIPQTTTTNSPLLKFRTPNKPVN) constitute a chloroplast transit peptide. Residues 121 to 228 (WQVAGYSDQV…VAVWGPFILI (108 aa)) form the Rieske domain. Residues Cys163, His165, Cys182, and His185 each contribute to the [2Fe-2S] cluster site. Fe cation is bound by residues His288 and His293.

Belongs to the choline monooxygenase family. [2Fe-2S] cluster is required as a cofactor. Requires Fe cation as cofactor. It depends on Mg(2+) as a cofactor. Expressed in roots and leaves.

The protein localises to the plastid. It is found in the chloroplast stroma. It catalyses the reaction choline + 2 reduced [2Fe-2S]-[ferredoxin] + O2 + 2 H(+) = betaine aldehyde hydrate + 2 oxidized [2Fe-2S]-[ferredoxin] + H2O. It functions in the pathway amine and polyamine biosynthesis; betaine biosynthesis via choline pathway; betaine aldehyde from choline (monooxygenase route): step 1/1. Its function is as follows. Catalyzes the first step of the osmoprotectant glycine betaine synthesis. This is Choline monooxygenase, chloroplastic (CMO) from Atriplex hortensis (Mountain spinach).